We begin with the raw amino-acid sequence, 931 residues long: Aftiphilin (931 aa).

Residues 1–49 (MEPDIIRMYSSSPPPLDNGAEDDEEDEFGEFGGFSEVSPSGVGFVDFDT) form a disordered region. The span at 19 to 29 (GAEDDEEDEFG) shows a compositional bias: acidic residues. The WXXF motif 1 motif lies at 28–31 (FGEF). Residues 33 to 45 (GFSEVSPSGVGFV) show a composition bias toward low complexity. Serine 151 is modified (phosphoserine). Residues 371-381 (SVKTSDVNEIG) are compositionally biased toward polar residues. Residues 371 to 454 (SVKTSDVNEI…PFVTSTQDSM (84 aa)) are disordered. The residue at position 395 (serine 395) is a Phosphoserine. A WXXF motif 2 motif is present at residues 433-436 (FGDF). Over residues 439–454 (ANGTTPPFVTSTQDSM) the composition is skewed to polar residues. The WXXF motif 3 motif lies at 476–479 (FGEF). 2 disordered regions span residues 494 to 561 (TESD…SSAG) and 599 to 636 (WQSQ…LQEP). Positions 516–530 (GGKDSKPDSKLKNGQ) are enriched in basic and acidic residues. Position 613 is a phosphothreonine (threonine 613). Residues 618 to 631 (SVSSAASKGAVASG) are compositionally biased toward low complexity. A CLTCL1/Clathrin-binding motif is present at residues 712-714 (YQW). The clathrin-binding stretch occupies residues 821–825 (LLNLD).

Self-associates. Interacts with GGA1 (via GAE domain). Interacts with GGA3 (via GAE domain), AP1G1 (via GAE domain) and AP1G2 (via GAE domain). Component of the aftiphilin/p200/gamma-synergin complex, at least composed of AFTPH/aftiphilin, HEATR5B/p200a and SYNRG/gamma-synergin, which plays a role in the AP1G1/AP-1-mediated protein trafficking from early to recycling endosomes. Within the complex interacts with HEATR5B/p200a and SYNRG/gamma-synergin; the interactions are direct. Interacts with AP1G1/AP-1; the interaction is required to recruit AFTPH/aftiphilin to the perinuclear region of the cell. Interacts with CLTCL1/Clathrin.

It localises to the cytoplasm. It is found in the perinuclear region. Its subcellular location is the cytoplasmic vesicle. The protein localises to the clathrin-coated vesicle. In terms of biological role, component of clathrin-coated vesicles. Component of the aftiphilin/p200/gamma-synergin complex, which plays roles in AP1G1/AP-1-mediated protein trafficking including the trafficking of transferrin from early to recycling endosomes, and the membrane trafficking of furin and the lysosomal enzyme cathepsin D between the trans-Golgi network (TGN) and endosomes. In Mus musculus (Mouse), this protein is Aftiphilin (Aftph).